The sequence spans 49 residues: Large ribosomal subunit protein bL33 (49 aa).

This sequence belongs to the bacterial ribosomal protein bL33 family.

This is Large ribosomal subunit protein bL33 from Alkaliphilus oremlandii (strain OhILAs) (Clostridium oremlandii (strain OhILAs)).